The sequence spans 144 residues: Large ribosomal subunit protein uL15 (144 aa).

Residues 1-57 (MELNNIKPADGAKKDKRRVGRGIGSGLGKTAGRGHKGQKSRAGGFHKVGFEGGQMPM) are disordered. The segment covering 21-31 (RGIGSGLGKTA) has biased composition (gly residues).

It belongs to the universal ribosomal protein uL15 family. As to quaternary structure, part of the 50S ribosomal subunit.

Its function is as follows. Binds to the 23S rRNA. The polypeptide is Large ribosomal subunit protein uL15 (Thiobacillus denitrificans (strain ATCC 25259 / T1)).